A 117-amino-acid polypeptide reads, in one-letter code: MDKKSARLRRATRARKKISELAAHRLVINRTPRHIYAQLIAPCGSQVLAAASTVEADLRTTVKSTGNAEAAVAVGKAIAERAIEKGIKTVAFDRSGFKYHGRVKALADAAREAGLQF.

The protein belongs to the universal ribosomal protein uL18 family. In terms of assembly, part of the 50S ribosomal subunit; part of the 5S rRNA/L5/L18/L25 subcomplex. Contacts the 5S and 23S rRNAs.

In terms of biological role, this is one of the proteins that bind and probably mediate the attachment of the 5S RNA into the large ribosomal subunit, where it forms part of the central protuberance. This chain is Large ribosomal subunit protein uL18, found in Pseudoalteromonas atlantica (strain T6c / ATCC BAA-1087).